Here is a 73-residue protein sequence, read N- to C-terminus: MEKNREIISKNNINVEVFLIRSLIGKLNKKVKVLKALGLNKIGDKKVHFLNQSIKGMLNETINMILLSEVSNV.

It belongs to the universal ribosomal protein uL30 family. Part of the 50S ribosomal subunit.

The polypeptide is Large ribosomal subunit protein uL30 (Borreliella afzelii (strain PKo) (Borrelia afzelii)).